A 284-amino-acid chain; its full sequence is Pseudopaline exporter CntI (284 aa).

10 consecutive transmembrane segments (helical) span residues valine 2–valine 22, leucine 34–leucine 54, glycine 74–alanine 94, alanine 96–glycine 116, alanine 122–serine 142, serine 147–isoleucine 167, isoleucine 179–phenylalanine 199, glycine 209–phenylalanine 229, isoleucine 236–tryptophan 256, and valine 259–serine 279. EamA domains lie at serine 8–valine 138 and valine 151–serine 279.

Belongs to the EamA transporter family.

The protein resides in the cell inner membrane. Functionally, transports the metallophore pseudopaline, which is involved in the acquisition of nickel and zinc, and thus enables bacterial growth inside the host, where metal access is limited. Is probably involved in the export of pseudopaline. Essential for iron acquisition during the interaction with airway mucus secretions (AMS). This is Pseudopaline exporter CntI from Pseudomonas aeruginosa (strain ATCC 15692 / DSM 22644 / CIP 104116 / JCM 14847 / LMG 12228 / 1C / PRS 101 / PAO1).